We begin with the raw amino-acid sequence, 377 residues long: Chaperone protein DnaJ (377 aa).

A J domain is found at 5–70; the sequence is DYYEVLGVSR…DKKAAYDQFG (66 aa). The CR-type zinc finger occupies 133–211; it reads GLTKELRIPT…CHGDGRVEKS (79 aa). Cys-146, Cys-149, Cys-163, Cys-166, Cys-185, Cys-188, Cys-199, and Cys-202 together coordinate Zn(2+). CXXCXGXG motif repeat units lie at residues 146–153, 163–170, 185–192, and 199–206; these read CDLCEGSG, CGTCHGQG, CPTCHGRG, and CTKCHGDG.

The protein belongs to the DnaJ family. As to quaternary structure, homodimer. The cofactor is Zn(2+).

It is found in the cytoplasm. Its function is as follows. Participates actively in the response to hyperosmotic and heat shock by preventing the aggregation of stress-denatured proteins and by disaggregating proteins, also in an autonomous, DnaK-independent fashion. Unfolded proteins bind initially to DnaJ; upon interaction with the DnaJ-bound protein, DnaK hydrolyzes its bound ATP, resulting in the formation of a stable complex. GrpE releases ADP from DnaK; ATP binding to DnaK triggers the release of the substrate protein, thus completing the reaction cycle. Several rounds of ATP-dependent interactions between DnaJ, DnaK and GrpE are required for fully efficient folding. Also involved, together with DnaK and GrpE, in the DNA replication of plasmids through activation of initiation proteins. The chain is Chaperone protein DnaJ from Shewanella baltica (strain OS223).